Reading from the N-terminus, the 163-residue chain is ATP synthase subunit b, sodium ion specific (163 aa).

The chain crosses the membrane as a helical span at residues 9-29 (VSIDINMFWQIINFLILMFFF).

This sequence belongs to the ATPase B chain family. F-type ATPases have 2 components, F(1) - the catalytic core - and F(0) - the membrane proton channel. F(1) has five subunits: alpha(3), beta(3), gamma(1), delta(1), epsilon(1). F(0) has three main subunits: a(1), b(2) and c(10-14). The alpha and beta chains form an alternating ring which encloses part of the gamma chain. F(1) is attached to F(0) by a central stalk formed by the gamma and epsilon chains, while a peripheral stalk is formed by the delta and b chains.

It localises to the cell inner membrane. Functionally, f(1)F(0) ATP synthase produces ATP from ADP in the presence of a proton or sodium gradient. F-type ATPases consist of two structural domains, F(1) containing the extramembraneous catalytic core and F(0) containing the membrane proton channel, linked together by a central stalk and a peripheral stalk. During catalysis, ATP synthesis in the catalytic domain of F(1) is coupled via a rotary mechanism of the central stalk subunits to proton translocation. In terms of biological role, component of the F(0) channel, it forms part of the peripheral stalk, linking F(1) to F(0). This Ilyobacter tartaricus protein is ATP synthase subunit b, sodium ion specific (atpF).